Here is a 405-residue protein sequence, read N- to C-terminus: Cysteine desulfurase IscS (405 aa).

Pyridoxal 5'-phosphate-binding positions include 75 to 76 (AT), N156, Q184, and 204 to 206 (SAH). K207 carries the N6-(pyridoxal phosphate)lysine modification. T244 contributes to the pyridoxal 5'-phosphate binding site. The active-site Cysteine persulfide intermediate is the C329. Residue C329 coordinates [2Fe-2S] cluster.

It belongs to the class-V pyridoxal-phosphate-dependent aminotransferase family. NifS/IscS subfamily. Homodimer. Forms a heterotetramer with IscU, interacts with other sulfur acceptors. Requires pyridoxal 5'-phosphate as cofactor.

It is found in the cytoplasm. It catalyses the reaction (sulfur carrier)-H + L-cysteine = (sulfur carrier)-SH + L-alanine. The protein operates within cofactor biosynthesis; iron-sulfur cluster biosynthesis. Functionally, master enzyme that delivers sulfur to a number of partners involved in Fe-S cluster assembly, tRNA modification or cofactor biosynthesis. Catalyzes the removal of elemental sulfur atoms from cysteine to produce alanine. Functions as a sulfur delivery protein for Fe-S cluster synthesis onto IscU, an Fe-S scaffold assembly protein, as well as other S acceptor proteins. This Acinetobacter baumannii (strain AB307-0294) protein is Cysteine desulfurase IscS.